The primary structure comprises 437 residues: GTPase Era, mitochondrial (437 aa).

The transit peptide at methionine 1 to glutamine 20 directs the protein to the mitochondrion. Residues arginine 112 to glycine 330 enclose the Era-type G domain. The G1 stretch occupies residues glycine 120–serine 127. Glycine 120 to serine 127 contacts GTP. The interval histidine 146–cysteine 150 is G2. Residues aspartate 167–glycine 170 are G3. GTP is bound at residue aspartate 167–isoleucine 171. Phosphoserine is present on serine 173. Asparagine 236–aspartate 239 serves as a coordination point for GTP. Positions asparagine 236–aspartate 239 are G4. The disordered stretch occupies residues leucine 270–arginine 292. The G5 stretch occupies residues leucine 308–alanine 310. One can recognise a KH type-2 domain in the interval leucine 360–lysine 437.

The protein belongs to the TRAFAC class TrmE-Era-EngA-EngB-Septin-like GTPase superfamily. Era GTPase family.

The protein resides in the mitochondrion matrix. Its subcellular location is the mitochondrion inner membrane. Functionally, probable GTPase that plays a role in the mitochondrial ribosomal small subunit assembly. Specifically binds the 12S mitochondrial rRNA (12S mt-rRNA) to a 33 nucleotide section delineating the 3' terminal stem-loop region. May act as a chaperone that protects the 12S mt-rRNA on the 28S mitoribosomal subunit during ribosomal small subunit assembly. This is GTPase Era, mitochondrial (Eral1) from Mus musculus (Mouse).